Consider the following 221-residue polypeptide: Serine/arginine-rich splicing factor 9 (221 aa).

2 consecutive RRM domains span residues 14–89 (GRIY…FPRT) and 111–187 (FRVL…PERS). Residue Lys-36 forms a Glycyl lysine isopeptide (Lys-Gly) (interchain with G-Cter in SUMO2) linkage. The segment at 188-200 (TSYGYSRSRSGSR) is interaction with SAFB1. Ser-189 carries the post-translational modification Phosphoserine. Low complexity predominate over residues 189–198 (SYGYSRSRSG). A disordered region spans residues 189-221 (SYGYSRSRSGSRGRDSPYQSRGSPHYFSPFRPY). Tyr-192 is modified (phosphotyrosine). Phosphoserine occurs at positions 193, 195, 204, 208, and 211. Position 214 is a phosphotyrosine (Tyr-214). Ser-216 is subject to Phosphoserine.

It belongs to the splicing factor SR family. Interacts with KHDRBS3. Interacts with HABP4. Interacts with NOL3/ARC/NOP30. Interacts with NSEP1/YB-1/YB1. Interacts with SAFB/SAFB1. Interacts with SRSF6/SFRS6. Interacts with TRA2B/SFRS10. Interacts with C1QBP. May also interact with DUSP11/PIR1. In terms of processing, extensively phosphorylated on serine residues in the RS domain. As to expression, expressed at high levels in the heart, kidney, pancreas and placenta, and at lower levels in the brain, liver, lung and skeletal muscle.

It is found in the nucleus. Its function is as follows. Plays a role in constitutive splicing and can modulate the selection of alternative splice sites. Represses the splicing of MAPT/Tau exon 10. This Homo sapiens (Human) protein is Serine/arginine-rich splicing factor 9 (SRSF9).